We begin with the raw amino-acid sequence, 245 residues long: Polyhedrin (245 aa).

The tract at residues 32–35 is nuclear localization signal; that stretch reads KRKK.

The protein belongs to the polyhedrin family.

The protein resides in the host nucleus. Its function is as follows. Major component of the virus occlusion bodies which are large proteinaceous structures termed polyhedra. These structures serve as the protective package for the virus particles outside the infected host and allow natural transmission of virus between insect hosts, assisting persistence in the environment. Forms the paracrystalline lattice of polyhedra and interacts with enveloped virions as well as other accessory molecules and structures to form a mature viral occlusion body. The protein is Polyhedrin (PH) of Lepidoptera (butterflies and moths).